Consider the following 242-residue polypeptide: N-alpha-acetyltransferase 60 (242 aa).

At 1 to 192 (MTEVVPSSAL…GGHPPWTILD (192 aa)) the chain is on the cytoplasmic side. One can recognise an N-acetyltransferase domain in the interval 13 to 182 (VSLRLLCHDD…DGFTYVLYIN (170 aa)). Substrate is bound at residue tyrosine 38. Lysine 79 carries the post-translational modification N6-acetyllysine; by autocatalysis. The active site involves tyrosine 97. Leucine 99 provides a ligand contact to substrate. 101–103 (LGV) is a binding site for acetyl-CoA. An N6-acetyllysine; by autocatalysis mark is found at lysine 105, lysine 109, and lysine 121. 109–114 (KHGIGS) contributes to the acetyl-CoA binding site. Histidine 138 is a catalytic residue. Residues asparagine 143 and 150-153 (YENR) each bind acetyl-CoA. The residue at position 156 (lysine 156) is an N6-acetyllysine; by autocatalysis. Positions 162-173 (PYYYSIRGVLKD) are required for homodimerization. Residue tyrosine 165 coordinates substrate. The segment at residues 193-236 (YIQHLGSALASLSPCSIPHRVYRQAHSLLCSFLPWSGISSKSGI) is an intramembrane region (helical). At 237–242 (EYSRTM) the chain is on the cytoplasmic side.

It belongs to the acetyltransferase family. NAA60 subfamily. As to quaternary structure, monomer and homodimer; monomer in presence of substrate and homodimer in its absence. In terms of processing, acetylated: autoacetylation is required for optimal acetyltransferase activity.

It is found in the golgi apparatus membrane. It carries out the reaction N-terminal L-methionyl-[transmembrane protein] + acetyl-CoA = N-terminal N(alpha)-acetyl-L-methionyl-[transmembrane protein] + CoA + H(+). It catalyses the reaction L-lysyl-[protein] + acetyl-CoA = N(6)-acetyl-L-lysyl-[protein] + CoA + H(+). Functionally, N-alpha-acetyltransferase that specifically mediates the acetylation of N-terminal residues of the transmembrane proteins, with a strong preference for N-termini facing the cytosol. Displays N-terminal acetyltransferase activity towards a range of N-terminal sequences including those starting with Met-Lys, Met-Val, Met-Ala and Met-Met. Required for normal chromosomal segregation during anaphase. May also show histone acetyltransferase activity; such results are however unclear in vivo and would require additional experimental evidences. The chain is N-alpha-acetyltransferase 60 from Homo sapiens (Human).